Consider the following 584-residue polypeptide: Alkaline nuclease (584 aa).

Residues 409 to 430 form a disordered region; it reads GGGADHHLRGSPGDSPPPIPFE.

This sequence belongs to the herpesviridae alkaline nuclease family. As to quaternary structure, interacts with major DNA-binding protein; this interaction increases the nuclease processivity of the alkaline exonuclease.

The protein localises to the host nucleus. It localises to the host cytoplasm. Functionally, plays a role in processing non linear or branched viral DNA intermediates in order to promote the production of mature packaged unit-length linear progeny viral DNA molecules. Exhibits endonuclease and exonuclease activities and accepts both double-stranded and single-stranded DNA as substrate. Exonuclease digestion of DNA is in the 5'-&gt; 3' direction and the products are 5'-monophosphate nucleosides. Additionally, forms a recombinase with the major DNA-binding protein, which displays strand exchange activity. This chain is Alkaline nuclease (UL98), found in Human cytomegalovirus (strain AD169) (HHV-5).